We begin with the raw amino-acid sequence, 127 residues long: Alkaline proteinase inhibitor (127 aa).

The N-terminal stretch at methionine 1–alanine 26 is a signal peptide. A disulfide bond links cysteine 53 and cysteine 70.

It belongs to the protease inhibitor I38 family.

Its subcellular location is the periplasm. In terms of biological role, inhibitor of the alkaline protease. This chain is Alkaline proteinase inhibitor (inh), found in Pseudomonas syringae pv. tomato (strain ATCC BAA-871 / DC3000).